The sequence spans 470 residues: ATP synthase subunit beta (470 aa).

155 to 162 (GGAGVGKT) contacts ATP.

It belongs to the ATPase alpha/beta chains family. F-type ATPases have 2 components, CF(1) - the catalytic core - and CF(0) - the membrane proton channel. CF(1) has five subunits: alpha(3), beta(3), gamma(1), delta(1), epsilon(1). CF(0) has three main subunits: a(1), b(2) and c(9-12). The alpha and beta chains form an alternating ring which encloses part of the gamma chain. CF(1) is attached to CF(0) by a central stalk formed by the gamma and epsilon chains, while a peripheral stalk is formed by the delta and b chains.

It localises to the cell membrane. It catalyses the reaction ATP + H2O + 4 H(+)(in) = ADP + phosphate + 5 H(+)(out). Functionally, produces ATP from ADP in the presence of a proton gradient across the membrane. The catalytic sites are hosted primarily by the beta subunits. This Lacticaseibacillus casei (Lactobacillus casei) protein is ATP synthase subunit beta.